Consider the following 142-residue polypeptide: Virulence-associated membrane protein 1 (142 aa).

The N-terminal stretch at methionine 1–alanine 20 is a signal peptide. Residues isoleucine 59 to leucine 79 form a helical membrane-spanning segment.

In terms of assembly, monomer.

It localises to the membrane. Functionally, during infection, may play a role in establishing and maintaining biotrophy; the formation of a tight interaction zone between the host and the pathogen. The sequence is that of Virulence-associated membrane protein 1 from Mycosarcoma maydis (Corn smut fungus).